We begin with the raw amino-acid sequence, 339 residues long: Glucokinase (339 aa).

16-21 is an ATP binding site; sequence GDIGGT.

It belongs to the bacterial glucokinase family.

The protein localises to the cytoplasm. It carries out the reaction D-glucose + ATP = D-glucose 6-phosphate + ADP + H(+). The polypeptide is Glucokinase (Rhizobium meliloti (strain 1021) (Ensifer meliloti)).